The following is a 403-amino-acid chain: Phosphopentomutase (403 aa).

Mn(2+) is bound by residues D13, D298, H303, D339, H340, and H351.

It belongs to the phosphopentomutase family. Mn(2+) serves as cofactor.

Its subcellular location is the cytoplasm. The catalysed reaction is 2-deoxy-alpha-D-ribose 1-phosphate = 2-deoxy-D-ribose 5-phosphate. It carries out the reaction alpha-D-ribose 1-phosphate = D-ribose 5-phosphate. It participates in carbohydrate degradation; 2-deoxy-D-ribose 1-phosphate degradation; D-glyceraldehyde 3-phosphate and acetaldehyde from 2-deoxy-alpha-D-ribose 1-phosphate: step 1/2. Isomerase that catalyzes the conversion of deoxy-ribose 1-phosphate (dRib-1-P) and ribose 1-phosphate (Rib-1-P) to deoxy-ribose 5-phosphate (dRib-5-P) and ribose 5-phosphate (Rib-5-P), respectively. This chain is Phosphopentomutase, found in Streptococcus thermophilus (strain CNRZ 1066).